Here is a 173-residue protein sequence, read N- to C-terminus: Galactose-6-phosphate isomerase subunit LacB (173 aa).

This sequence belongs to the LacAB/RpiB family. In terms of assembly, heteromultimeric protein consisting of LacA and LacB.

The catalysed reaction is aldehydo-D-galactose 6-phosphate = keto-D-tagatose 6-phosphate. Its pathway is carbohydrate metabolism; D-galactose 6-phosphate degradation; D-tagatose 6-phosphate from D-galactose 6-phosphate: step 1/1. The chain is Galactose-6-phosphate isomerase subunit LacB from Clostridium acetobutylicum (strain ATCC 824 / DSM 792 / JCM 1419 / IAM 19013 / LMG 5710 / NBRC 13948 / NRRL B-527 / VKM B-1787 / 2291 / W).